The chain runs to 207 residues: LexA repressor (207 aa).

Positions 28–48 (VREIGEAVGLASSSTVHGHLS) form a DNA-binding region, H-T-H motif. Residues S130 and K168 each act as for autocatalytic cleavage activity in the active site.

It belongs to the peptidase S24 family. As to quaternary structure, homodimer.

It carries out the reaction Hydrolysis of Ala-|-Gly bond in repressor LexA.. Functionally, represses a number of genes involved in the response to DNA damage (SOS response), including recA and lexA. In the presence of single-stranded DNA, RecA interacts with LexA causing an autocatalytic cleavage which disrupts the DNA-binding part of LexA, leading to derepression of the SOS regulon and eventually DNA repair. This chain is LexA repressor, found in Staphylococcus haemolyticus (strain JCSC1435).